We begin with the raw amino-acid sequence, 124 residues long: Large ribosomal subunit protein bL12 (124 aa).

The protein belongs to the bacterial ribosomal protein bL12 family. In terms of assembly, homodimer. Part of the ribosomal stalk of the 50S ribosomal subunit. Forms a multimeric L10(L12)X complex, where L10 forms an elongated spine to which 2 to 4 L12 dimers bind in a sequential fashion. Binds GTP-bound translation factors.

Forms part of the ribosomal stalk which helps the ribosome interact with GTP-bound translation factors. Is thus essential for accurate translation. This chain is Large ribosomal subunit protein bL12, found in Chlorobium chlorochromatii (strain CaD3).